The following is a 785-amino-acid chain: Endonuclease MutS2 (785 aa).

Residue 335–342 (GPNTGGKT) participates in ATP binding. The Smr domain occupies 710 to 785 (LDLRGERYED…GNGVTIVEFK (76 aa)).

Belongs to the DNA mismatch repair MutS family. MutS2 subfamily. Homodimer. Binds to stalled ribosomes, contacting rRNA.

Functionally, endonuclease that is involved in the suppression of homologous recombination and thus may have a key role in the control of bacterial genetic diversity. In terms of biological role, acts as a ribosome collision sensor, splitting the ribosome into its 2 subunits. Detects stalled/collided 70S ribosomes which it binds and splits by an ATP-hydrolysis driven conformational change. Acts upstream of the ribosome quality control system (RQC), a ribosome-associated complex that mediates the extraction of incompletely synthesized nascent chains from stalled ribosomes and their subsequent degradation. Probably generates substrates for RQC. This chain is Endonuclease MutS2, found in Listeria monocytogenes serotype 4b (strain F2365).